The sequence spans 809 residues: Transitional endoplasmic reticulum ATPase homolog 1 (809 aa).

The disordered stretch occupies residues 1–21; that stretch reads MASVPTHQSEKEKKNDELSTA. The span at 8 to 21 shows a compositional bias: basic and acidic residues; the sequence is QSEKEKKNDELSTA. Residues 253–259, asparagine 354, histidine 390, and 527–532 each bind ATP; these read PGTGKTL and GCGKTL. The segment at 779–809 is disordered; that stretch reads FGNNFKFPGEQRGSDAPSAPVPAQDDDDLYN. Residues 803–809 form an interaction with ufd-2 region; the sequence is DDDDLYN.

Belongs to the AAA ATPase family. CDC48 subfamily. As to quaternary structure, homohexamer; oligomerization is ATP-independent. Forms a ring-shaped particle of 18.3 nm diameter, that displays 6-fold radial symmetry. Interacts with cdc-48.2 and thus may form heterohexamers. Forms a complex composed of cdc-48.1, him-6 and crp-1; within the complex, interacts with helicase him-6 and GTPase crp-1. Forms a complex composed of deubiquitinating enzyme atx-3, adapter ubxn-5 and cdc-48.1; within the complex, interacts (via N-terminus) with ubxn-5 and with atx-3. Forms a complex composed of deubiquitinating enzyme atx-3, E4 ubiquitin-protein ligase ufd-2 and cdc-48.1; within the complex, interacts with atx-3 and (via DDDLYN motif) with ufd-2. Interacts (via N-terminus) with atx-3 (via RRDR motif); the interaction is not required for atx-3 enzymatic activity. Forms a complex composed of cdc-48.1, myosin chaperone unc-45, ubiquitin-protein ligases ufd-2 and chn-1; within the complex, interacts (via DDDLYN motif) with ufd-2 and targets myosin chaperone unc-45 for proteasomal degradation. Forms a complex composed of ubxn-3, ufd-1, npl-4.1 and cdc-48.1; within the complex, interacts (via N-terminus) with ubxn-3 (via FPK motif) and with ufd-1. Forms a complex composed of ubxn-3, cdc-48.1 and/or cdc-48.2 and substrate cdt-1. Interacts (via N-terminus) with ubxn-1. Interacts (via N-terminus) with ubxn-2. Interacts (via N-terminus) with ubxn-4. Interacts with ubxn-6. Interacts with ufd-3. Does not interact with air-2. Expressed in germ cells and spermatheca. Expressed in body wall muscles.

Its subcellular location is the cytoplasm. The protein resides in the perinuclear region. The catalysed reaction is ATP + H2O = ADP + phosphate + H(+). Its activity is regulated as follows. The first ATP-binding region has low ATPase activity. The second ATP-binding region is responsible for ATPase activity. ATP binding to the first ATP-binding region induces intrinsic activity of the second ATP-binding region. While ATP binding to the first ATP-binding region appears to prevent ATP hydrolysis by the second ATP-binding region, ADP-binding to first region promotes the coordinate and cooperative ATPase cycle of the second ATP-binding region. ATP binding to the first ATP-binding region induces a conformational change, promoting the rotation of the first ATP-binding region relative to the second ATP-binding region in the hexamer. Inhibited by N-ethylmaleimide (NEM). In terms of biological role, ATP-dependent chaperone which probably uses the energy provided by ATP hydrolysis to generate mechanical force to unfold substrate proteins, disassemble protein complexes, and disaggregate protein aggregates. Can also prevent aggregation of unfolded proteins also in an ATP-independent manner. Targets polyubiquitinated proteins for proteasomal degradation by binding to 'Lys-48'-linked polyubiquitin chains. Involved in the cytoplasmic elimination of misfolded proteins exported from the ER. This pathway, known as ERAD, prevents the activation of the unfolded protein response (UPR) caused by the accumulation of misfolded proteins in the ER. In association with helicase him-6 and GTPase crp-1, regulates the unfolded protein response (UPR) following ER stress, probably independently of the ERAD pathway. Together with udf-2 and chn-1, regulates myosin assembly in body wall muscles by targeting myosin chaperone unc-45 for proteasomal degradation. Together with the ufd-1-npl-4 complex, controls the switch from spermatogenesis to oogenesis by regulating E3 ligase cul-2 complex-mediated tra-1 proteasomal degradation. During oocyte meiosis and together with cdc-48.2, required for chromosome condensation at the diakinesis phase in prophase I and for progression of metaphase I. During the first embryonic cell division, regulates DNA replication and thus chromosome segregation and decondensation, and nuclear envelope re-assembly. In S phase and in association with ufd-1, npl-4.1 and/or npl-4.2 and ubxn-3, ensures the degradation of DNA licensing factor cdt-1 after the initiation of DNA replication and thus the disassembly of the DNA replication CMG helicase complex by promoting the dissociation from chromatin of several of its components including cdc-45 and sld-5. Regulates ubxn-3 nuclear localization during S phase. During the first embryonic cell divisions and together with cdc-48.2, regulates the re-assembly of the nuclear envelope after mitosis possibly by inactivating kinase air-2, a component of the chromosomal passenger complex (CPC). However, in another study, cdc-48.1 does not appear to be implicated in the regulation of air-2. The polypeptide is Transitional endoplasmic reticulum ATPase homolog 1 (Caenorhabditis elegans).